We begin with the raw amino-acid sequence, 507 residues long: RNA-binding protein Nova-1 (507 aa).

The segment at 1–44 (MMAAAPIQQNGTHTGVPIDLDPPDSRKRPLEAPPEAGSTKRTNT) is disordered. Residues 27–43 (KRPLEAPPEAGSTKRTN) carry the Bipartite nuclear localization signal motif. Residues 49-116 (QYFLKVLIPS…EALNAVHGFI (68 aa)) form the KH 1 domain. The segment at 139–171 (QTTVNPDRIKQTLPSSPTTTKSSPSDPMTTSRA) is disordered. Residues 150-169 (TLPSSPTTTKSSPSDPMTTS) show a composition bias toward low complexity. Serine 154 carries the phosphoserine modification. KH domains are found at residues 171–237 (ANQV…VELI) and 421–488 (KDVV…QYLI). A required for RNA binding region spans residues 419-503 (GSKDVVEIAV…YEQGVRAANP (85 aa)).

Interacts with PTBP2; the interaction is direct. Expressed in cerebellum, brain stem, hippocampus, and frontal cortex.

The protein localises to the nucleus. In terms of biological role, functions to regulate alternative splicing in neurons by binding pre-mRNA in a sequence-specific manner to activate exon inclusion or exclusion. It binds specifically to the sequences 5'-YCAY-3' and regulates splicing in only a subset of regulated exons. Binding to an exonic 5'-YCAY-3' cluster changes the protein complexes assembled on pre-mRNA, blocking U1 snRNP binding and exon inclusion, whereas binding to an intronic 5'-YCAY-3' cluster enhances spliceosome assembly and exon inclusion. Binding to 5'-YCAY-3' clusters results in a local and asymmetric action to regulate spliceosome assembly and alternative splicing in neurons. Binding to an exonic 5'-YCAY-3' cluster changed the protein complexes assembled on pre-mRNA, blocking U1 snRNP (small nuclear ribonucleoprotein) binding and exon inclusion, whereas binding to an intronic 5'-YCAY-3' cluster enhanced spliceosome assembly and exon inclusion. With NOVA1, they perform unique biological functions in different brain areas and cell types. Autoregulates its own expression by acting as a splicing repressor. Acts to activate the inclusion of exon E3A in the glycine receptor alpha-2 chain and of exon E9 in gamma-aminobutyric-acid receptor gamma-2 subunit via a distal downstream UCAU-rich intronic splicing enhancer. Acts to regulate a novel glycine receptor alpha-2 chain splice variant (alpha-2N) in developing spinal cord. This is RNA-binding protein Nova-1 from Homo sapiens (Human).